A 387-amino-acid chain; its full sequence is MSVIKMTDLDLAGKRVFIRADLNVPVKDGKVTSDARIRASLPTIELALKQGAKVMVTSHLGRPTEGEYNEEFSLLPVVNYLKDKLSNPVRLVKDYLDGVDVAEGELVVLENVRFNKGEKKDDETLSKKYAALCDVFVMDAFGTAHRAQASTHGIGKFADVACAGPLLAAELDALGKALKEPARPMVAIVGGSKVSTKLTVLDSLSKIADQLIVGGGIANTFIAAQGHDVGKSLYEADLVDEAKRLLSTCNIPVPSDVRVATEFSETAPATLKSVNDVKADEQILDIGDASAQELAEILKNAKTILWNGPVGVFEFPNFRKGTEIVANAIADSEAFSIAGGGDTLAAIDLFGIADKISYISTGGGAFLEFVEGKVLPAVAMLEERAKK.

Substrate-binding positions include 21 to 23 (DLN), R36, and 59 to 62 (HLGR). The residue at position 84 (K84) is an N6-acetyllysine. Positions 113 and 146 each coordinate substrate. ATP is bound by residues K197, E314, and 340–343 (GGDT).

It belongs to the phosphoglycerate kinase family. Monomer.

The protein localises to the cytoplasm. The enzyme catalyses (2R)-3-phosphoglycerate + ATP = (2R)-3-phospho-glyceroyl phosphate + ADP. It participates in carbohydrate degradation; glycolysis; pyruvate from D-glyceraldehyde 3-phosphate: step 2/5. This is Phosphoglycerate kinase from Escherichia coli O9:H4 (strain HS).